The primary structure comprises 610 residues: MPPKKAPAKKLHELAAEVRVGHKINDISKKTFIVGKQFATGGFGRIHTCTEEGKSQQMVMKIEPSTNGPLLTEVVVFNRILKKELIESYKKKKKISWIGLPYLIANGYFTYESEKMRYMIIPKYATSLEAVRETNGGTLAMKDSLTVASCILDALEYLHESDYAHADVKAANILLEKQGVYSTAVLVDFGLAHRTTNNVDKPDKKRAHNGTCIFTSTDAHRGNNPSFRGDIEILAYNLMMWATGTLPWMALESSPEKVFDAKQKFIAGLPGTLQNVLKNESSAVVGCIASMFDISMKTNYTDKVDMGKLKKLVTDAIQKTSSDGKKTPTRQKKLAEEDKNAVTPKRSTRRLAVKEESDNKDNDEVEVKPEKKATPRKRTTRKAVEVNNDSDDNEEQYENPKSKSSRTQTKSKRAKEEDVDDEEEIIIPKSSRSRSKVQLSGEGSDVTTPSSAASTSRSRSIRLGLTSSTASSNKVAKKIEQKYKRLSMNKSSLVPVTISVASDKSPTTSTPSSSSGLRSKRKSSEDVGEGITLKTQVLITPAIKKAKTKSGISSATKASPTELRRVPGVRNFPKGRRSMIIKETSAKYKERLASRQTKPTFDDSSCSSEV.

The Protein kinase domain maps to 32 to 384 (FIVGKQFATG…PRKRTTRKAV (353 aa)). ATP is bound by residues 38–46 (FATGGFGRI) and Lys61. The active-site Proton acceptor is the Asp167. Disordered regions lie at residues 317 to 476 (IQKT…NKVA), 498 to 530 (ISVASDKSPTTSTPSSSSGLRSKRKSSEDVGEG), 544 to 577 (KKAKTKSGISSATKASPTELRRVPGVRNFPKGRR), and 590 to 610 (ERLASRQTKPTFDDSSCSSEV). Positions 352–373 (AVKEESDNKDNDEVEVKPEKKA) are enriched in basic and acidic residues. Residues 388-397 (NDSDDNEEQY) are compositionally biased toward acidic residues. Residues 447 to 458 (TTPSSAASTSRS) show a composition bias toward low complexity. Residues 465-474 (LTSSTASSNK) show a composition bias toward polar residues. The span at 502–517 (SDKSPTTSTPSSSSGL) shows a compositional bias: low complexity. 2 stretches are compositionally biased toward polar residues: residues 550 to 559 (SGISSATKAS) and 594 to 610 (SRQTKPTFDDSSCSSEV).

It belongs to the protein kinase superfamily. CK1 Ser/Thr protein kinase family. VRK subfamily. In terms of processing, autophosphorylates in vitro. As to expression, present in germ cells at all stages of progression from the mitotic zone to mature oocytes, but not in maturing spermatids (at the protein level). Expressed in the ventral nerve cord and vulva cells.

Its subcellular location is the nucleus. The protein localises to the cytoplasm. It localises to the cajal body. The catalysed reaction is L-seryl-[protein] + ATP = O-phospho-L-seryl-[protein] + ADP + H(+). The enzyme catalyses L-threonyl-[protein] + ATP = O-phospho-L-threonyl-[protein] + ADP + H(+). Functionally, serine/threonine kinase that phosphorylates baf-1, thus regulating the association of baf-1 with chromatin and nuclear membrane proteins during nuclear envelope formation. May act through the egl-17 signaling pathway. Essential in hermaphrodites for formation of the vulva, uterus, and uterine seam cells and for development and maintenance of the somatic gonad and thus the germ line. Acts to prevent cep-1 from triggering an inappropriate cell cycle arrest, thereby promoting germ cell proliferation. Regulates anchor cell polarity and the timing of anchor cell invasion through the basement membranes separating vulval and somatic gonadal cells during the L3 larval stage. The polypeptide is Serine/threonine-protein kinase VRK1 (Caenorhabditis elegans).